Here is a 244-residue protein sequence, read N- to C-terminus: Monothiol glutaredoxin-4 (244 aa).

The Thioredoxin domain occupies 3–110; it reads VVEIKSQDQF…FVKSLEILSN (108 aa). A disordered region spans residues 116 to 143; that stretch reads ANNAKGPKSTSDEESSGSSDDEEDETEE. Positions 127 to 143 are enriched in acidic residues; sequence DEESSGSSDDEEDETEE. The 99-residue stretch at 146-244 folds into the Glutaredoxin domain; it reads NARLVKLVQA…DPEYFQHALQ (99 aa). Lys163 is a binding site for glutathione. Cys171 provides a ligand contact to [2Fe-2S] cluster. Glutathione is bound by residues Arg200, Phe212, and 225–226; that span reads LD.

Belongs to the glutaredoxin family. Monothiol subfamily. Homodimer. Heterodimer with FRA2.

In terms of biological role, monothiol glutaredoxin involved in the biogenesis of iron-sulfur clusters. Binds one iron-sulfur cluster per dimer. The iron-sulfur cluster is bound between subunits, and is complexed by a bound glutathione and a cysteine residue from each subunit. This chain is Monothiol glutaredoxin-4 (GRX4), found in Saccharomyces cerevisiae (strain ATCC 204508 / S288c) (Baker's yeast).